The chain runs to 146 residues: 3-dehydroquinate dehydratase (146 aa).

The Proton acceptor role is filled by Y23. The substrate site is built by N74, H80, and D87. The active-site Proton donor is the H100. Substrate contacts are provided by residues 101–102 and R111; that span reads IS.

It belongs to the type-II 3-dehydroquinase family. As to quaternary structure, homododecamer.

It catalyses the reaction 3-dehydroquinate = 3-dehydroshikimate + H2O. Its pathway is metabolic intermediate biosynthesis; chorismate biosynthesis; chorismate from D-erythrose 4-phosphate and phosphoenolpyruvate: step 3/7. Functionally, catalyzes a trans-dehydration via an enolate intermediate. The sequence is that of 3-dehydroquinate dehydratase from Bacillus cereus (strain B4264).